Consider the following 240-residue polypeptide: 2-C-methyl-D-erythritol 2,4-cyclodiphosphate synthase, apicoplast (240 aa).

Residues Asp-71 and His-73 each coordinate a divalent metal cation. 4-CDP-2-C-methyl-D-erythritol 2-phosphate contacts are provided by residues 71–73 (DIH) and 115–116 (HS). His-123 lines the a divalent metal cation pocket. Residues 137-139 (DIG), 142-146 (FPDKD), 181-187 (AQVPKIS), and 212-214 (GKT) contribute to the 4-CDP-2-C-methyl-D-erythritol 2-phosphate site.

It belongs to the IspF family. As to quaternary structure, homotrimer. It depends on a divalent metal cation as a cofactor.

The protein localises to the plastid. Its subcellular location is the apicoplast. It carries out the reaction 4-CDP-2-C-methyl-D-erythritol 2-phosphate = 2-C-methyl-D-erythritol 2,4-cyclic diphosphate + CMP. Its pathway is isoprenoid biosynthesis; isopentenyl diphosphate biosynthesis via DXP pathway; isopentenyl diphosphate from 1-deoxy-D-xylulose 5-phosphate: step 4/6. Its function is as follows. In the mevalonate-independent isoprenoid biosynthetic pathway, converts 4-diphosphocytidyl-2C-methyl-D-erythritol 2-phosphate into 2C-methyl-D-erythritol 2,4-cyclodiphosphate and CMP. This chain is 2-C-methyl-D-erythritol 2,4-cyclodiphosphate synthase, apicoplast, found in Plasmodium falciparum (isolate 3D7).